The sequence spans 246 residues: tRNA (guanine-N(1)-)-methyltransferase (246 aa).

Glycine 114 provides a ligand contact to S-adenosyl-L-methionine.

It belongs to the RNA methyltransferase TrmD family. As to quaternary structure, homodimer.

The protein resides in the cytoplasm. It catalyses the reaction guanosine(37) in tRNA + S-adenosyl-L-methionine = N(1)-methylguanosine(37) in tRNA + S-adenosyl-L-homocysteine + H(+). Its function is as follows. Specifically methylates guanosine-37 in various tRNAs. The protein is tRNA (guanine-N(1)-)-methyltransferase of Novosphingobium aromaticivorans (strain ATCC 700278 / DSM 12444 / CCUG 56034 / CIP 105152 / NBRC 16084 / F199).